The following is a 378-amino-acid chain: Cobalt-precorrin-5B C(1)-methyltransferase (378 aa).

It belongs to the CbiD family.

The catalysed reaction is Co-precorrin-5B + S-adenosyl-L-methionine = Co-precorrin-6A + S-adenosyl-L-homocysteine. The protein operates within cofactor biosynthesis; adenosylcobalamin biosynthesis; cob(II)yrinate a,c-diamide from sirohydrochlorin (anaerobic route): step 6/10. In terms of biological role, catalyzes the methylation of C-1 in cobalt-precorrin-5B to form cobalt-precorrin-6A. In Photorhabdus laumondii subsp. laumondii (strain DSM 15139 / CIP 105565 / TT01) (Photorhabdus luminescens subsp. laumondii), this protein is Cobalt-precorrin-5B C(1)-methyltransferase.